The chain runs to 341 residues: ATPase GET3 (341 aa).

ATP is bound at residue 34 to 41 (KGGVGKTT). Aspartate 63 is an active-site residue. ATP contacts are provided by glutamate 245 and asparagine 272. Cysteine 283 and cysteine 286 together coordinate Zn(2+).

It belongs to the arsA ATPase family. Homodimer.

The protein resides in the cytoplasm. The protein localises to the endoplasmic reticulum. Functionally, ATPase required for the post-translational delivery of tail-anchored (TA) proteins to the endoplasmic reticulum. Recognizes and selectively binds the transmembrane domain of TA proteins in the cytosol. This complex then targets to the endoplasmic reticulum by membrane-bound receptors, where the tail-anchored protein is released for insertion. This process is regulated by ATP binding and hydrolysis. ATP binding drives the homodimer towards the closed dimer state, facilitating recognition of newly synthesized TA membrane proteins. ATP hydrolysis is required for insertion. Subsequently, the homodimer reverts towards the open dimer state, lowering its affinity for the membrane-bound receptor, and returning it to the cytosol to initiate a new round of targeting. In Paracoccidioides lutzii (strain ATCC MYA-826 / Pb01) (Paracoccidioides brasiliensis), this protein is ATPase GET3.